A 386-amino-acid polypeptide reads, in one-letter code: ADP,ATP carrier protein, mitochondrial (386 aa).

The N-terminal 76 residues, 1-76, are a transit peptide targeting the mitochondrion; it reads ADNQHPTVYQ…ANASPVFVQA (76 aa). Solcar repeat units lie at residues 83-176, 188-281, and 289-375; these read AAFA…FKRL, KWFA…LKPV, and DSFF…LQVI. A run of 5 helical transmembrane segments spans residues 85–112, 153–177, 186–206, 257–278, and 292–312; these read FATDFLMGGVSAAVSKTAAAPIERVKLL, TANVIRYFPTQALNFAFKDYFKRLF, YWKWFAGNLASGGGAGASSLL, FNISCVGIIVYRGLYFGMYDSL, and FASFALGWLITNGAGLASYPI. Residues Arg-158 and Lys-170 each coordinate ADP. Arg-316 contributes to the ADP binding site. Residues 316-321 form an important for transport activity region; sequence RRRMMM. Residues 316–321 carry the Nucleotide carrier signature motif motif; it reads RRRMMM. The helical transmembrane segment at 352-372 threads the bilayer; the sequence is AGANVLRAVAGAGVLAGYDKL.

It belongs to the mitochondrial carrier (TC 2.A.29) family. In terms of assembly, monomer.

It is found in the mitochondrion inner membrane. It catalyses the reaction ADP(in) + ATP(out) = ADP(out) + ATP(in). With respect to regulation, the matrix-open state (m-state) is inhibited by the membrane-permeable bongkrekic acid (BKA). The cytoplasmic-open state (c-state) is inhibited by the membrane-impermeable toxic inhibitor carboxyatractyloside (CATR). Its function is as follows. ADP:ATP antiporter that mediates import of ADP into the mitochondrial matrix for ATP synthesis, and export of ATP out to fuel the cell. Cycles between the cytoplasmic-open state (c-state) and the matrix-open state (m-state): operates by the alternating access mechanism with a single substrate-binding site intermittently exposed to either the cytosolic (c-state) or matrix (m-state) side of the inner mitochondrial membrane. This is ADP,ATP carrier protein, mitochondrial (ANT1) from Solanum tuberosum (Potato).